The chain runs to 57 residues: uncharacterized protein (57 aa).

This is an uncharacterized protein from Methanocaldococcus jannaschii (strain ATCC 43067 / DSM 2661 / JAL-1 / JCM 10045 / NBRC 100440) (Methanococcus jannaschii).